Reading from the N-terminus, the 139-residue chain is Gas vesicle protein A (139 aa).

The segment at E113–R139 is disordered. The span at A129–R139 shows a compositional bias: basic residues.

It belongs to the gas vesicle GvpA family. In terms of assembly, the gas vesicle shell is 2 nm thick and consists of a single layer of this protein. It forms helical ribs nearly perpendicular to the long axis of the vesicle.

It localises to the gas vesicle shell. Gas vesicles are hollow, gas filled proteinaceous nanostructures found in some microorganisms. During planktonic growth they allow positioning of the organism at a favorable depth for light or nutrient acquisition. GvpA forms the protein shell. The chain is Gas vesicle protein A from Mycobacterium sp. (strain JLS).